We begin with the raw amino-acid sequence, 160 residues long: Ribosomal RNA large subunit methyltransferase H (160 aa).

Residues L76, G108, and 127-132 (FGRMTF) each bind S-adenosyl-L-methionine.

The protein belongs to the RNA methyltransferase RlmH family. In terms of assembly, homodimer.

It is found in the cytoplasm. The enzyme catalyses pseudouridine(1915) in 23S rRNA + S-adenosyl-L-methionine = N(3)-methylpseudouridine(1915) in 23S rRNA + S-adenosyl-L-homocysteine + H(+). Its function is as follows. Specifically methylates the pseudouridine at position 1915 (m3Psi1915) in 23S rRNA. In Methylocella silvestris (strain DSM 15510 / CIP 108128 / LMG 27833 / NCIMB 13906 / BL2), this protein is Ribosomal RNA large subunit methyltransferase H.